The following is a 273-amino-acid chain: 4-hydroxy-tetrahydrodipicolinate reductase (273 aa).

NAD(+)-binding positions include 11-16 and E36; that span reads GAGGRM. An NADP(+)-binding site is contributed by R37. NAD(+) is bound by residues 100–102 and 124–127; these read GTT and AANY. The active-site Proton donor/acceptor is the H157. A (S)-2,3,4,5-tetrahydrodipicolinate-binding site is contributed by H158. K161 functions as the Proton donor in the catalytic mechanism. A (S)-2,3,4,5-tetrahydrodipicolinate-binding site is contributed by 167 to 168; that stretch reads GT.

The protein belongs to the DapB family.

It is found in the cytoplasm. It catalyses the reaction (S)-2,3,4,5-tetrahydrodipicolinate + NAD(+) + H2O = (2S,4S)-4-hydroxy-2,3,4,5-tetrahydrodipicolinate + NADH + H(+). It carries out the reaction (S)-2,3,4,5-tetrahydrodipicolinate + NADP(+) + H2O = (2S,4S)-4-hydroxy-2,3,4,5-tetrahydrodipicolinate + NADPH + H(+). It functions in the pathway amino-acid biosynthesis; L-lysine biosynthesis via DAP pathway; (S)-tetrahydrodipicolinate from L-aspartate: step 4/4. In terms of biological role, catalyzes the conversion of 4-hydroxy-tetrahydrodipicolinate (HTPA) to tetrahydrodipicolinate. This chain is 4-hydroxy-tetrahydrodipicolinate reductase, found in Acinetobacter baumannii (strain ACICU).